We begin with the raw amino-acid sequence, 523 residues long: UDP-N-acetylmuramyl-tripeptide synthetase (523 aa).

S38 provides a ligand contact to UDP-N-acetyl-alpha-D-muramoyl-L-alanyl-D-glutamate. 116 to 122 (GTKGKTT) is an ATP binding site. UDP-N-acetyl-alpha-D-muramoyl-L-alanyl-D-glutamate-binding positions include 162-163 (TT), S189, and R197. Residue K231 is modified to N6-carboxylysine.

Belongs to the MurCDEF family. MurE subfamily. Post-translationally, carboxylation is probably crucial for Mg(2+) binding and, consequently, for the gamma-phosphate positioning of ATP.

The protein resides in the cytoplasm. It functions in the pathway cell wall biogenesis; peptidoglycan biosynthesis. In terms of biological role, catalyzes the addition of an amino acid to the nucleotide precursor UDP-N-acetylmuramoyl-L-alanyl-D-glutamate (UMAG) in the biosynthesis of bacterial cell-wall peptidoglycan. The chain is UDP-N-acetylmuramyl-tripeptide synthetase from Lactobacillus acidophilus (strain ATCC 700396 / NCK56 / N2 / NCFM).